The primary structure comprises 189 residues: UPF0301 protein RAF_ORF0041 (189 aa).

It belongs to the UPF0301 (AlgH) family.

This is UPF0301 protein RAF_ORF0041 from Rickettsia africae (strain ESF-5).